The chain runs to 595 residues: Protein alan shepard (595 aa).

Residues 1-12 (MHPRYSPAPPPH) are compositionally biased toward pro residues. Residues 1-82 (MHPRYSPAPP…ASVAAAPPTP (82 aa)) are disordered. Y5 is modified (phosphotyrosine). Over residues 13–31 (QQQQQQQQQPMGGPHQQQS) the composition is skewed to low complexity. The span at 32–43 (AGGGPGHGGGAS) shows a compositional bias: gly residues. The span at 50–68 (PNSQQLPPQMPRSQNYANG) shows a compositional bias: polar residues. Positions 69–78 (SSSAASVAAA) are enriched in low complexity. Phosphotyrosine occurs at positions 138 and 154. Positions 184–238 (RVPTAASPSNTNSSSSSNTGSQSGTLSTSLSNTTNTNTTMGPNGTAQNQNQQGGE) are disordered. A compositionally biased stretch (low complexity) spans 190–238 (SPSNTNSSSSSNTGSQSGTLSTSLSNTTNTNTTMGPNGTAQNQNQQGGE). RRM domains follow at residues 243 to 316 (TNLY…MAKQ) and 322 to 401 (TNLY…FADG). Positions 569-595 (MTDSEQASTAASPDEAYTQYPHQAAPK) are disordered.

Functionally, has a role in the perception of gravity. The sequence is that of Protein alan shepard from Drosophila virilis (Fruit fly).